A 268-amino-acid chain; its full sequence is Magnesium dechelatase SGR1, chloroplastic (268 aa).

The transit peptide at 1–48 (MCSLSAIMLLPTKLKPAYSDKRSNSSSSSSLFFNNRRSKKKNQSIVPV) directs the protein to the chloroplast.

Belongs to the staygreen family. In terms of assembly, interacts with HCAR, the chlorophyll catabolic enzymes (CCEs) NYC1, PAO and RCCR, and the LHCII complex. Part of a SGR1-CCE-LHCII complex, which acts in chlorophyll breakdown. Expressed in roots, leaves, seeds, flowers, buds, petals, sepals and siliques.

It is found in the plastid. The protein resides in the chloroplast thylakoid membrane. The enzyme catalyses chlorophyll a + 2 H(+) = pheophytin a + Mg(2+). Functionally, magnesium chelatase involved in chlorophyll a degradation in the chlorophyll-protein complexes of photosystem I (PSI) and photosystem II (PSII). Contributes to the degradation of PSI and PSII in the thylakoid membranes. Required to trigger chlorophyll degradation during natural and dark-induced leaf senescence. Mediates chlorophyll degradation during embryo degreening. Recombinant SGR1 possesses high dechelating activity against chlorophyll a, very low activity against chlorophyllide a, and no activity against chlorophyll b. Magnesium dechelation of chlorophyll a by SGR1 activates chlorophyll b degradation by inducing the expression of NYC1, an enzyme involved in chlorophyll b degradation. The protein is Magnesium dechelatase SGR1, chloroplastic of Arabidopsis thaliana (Mouse-ear cress).